Reading from the N-terminus, the 551-residue chain is Scaffold protein OPG125 (551 aa).

Belongs to the orthopoxvirus protein OPG125 family. As to quaternary structure, homotrimer. Self-assembles to form a layer. Interacts with OPG158 (via N-terminus); this interaction is necessary for OPG125 association with membranes.

The protein resides in the membrane. In terms of biological role, scaffold protein which forms a transitory spherical honeycomb lattice providing curvature and rigidity to the convex membrane of crescent and immature virions (IV). This association occurs concomitantly with viral membrane formation. Targeted by the drug rifampicin, which prevents the formation of this lattice, and hence virus morphogenesis. In the presence of rifampicin, irregularly shaped membranes that lack the honeycomb layer accumulate around areas of electron-dense viroplasm. This layer is lost from virions during maturation from IV to mature virion (MV), through the proteolysis of OPG158 N-terminus. The sequence is that of Scaffold protein OPG125 (OPG125) from Vaccinia virus (strain Ankara) (VACV).